The following is a 689-amino-acid chain: Glycine--tRNA ligase beta subunit (689 aa).

Belongs to the class-II aminoacyl-tRNA synthetase family. In terms of assembly, tetramer of two alpha and two beta subunits.

The protein localises to the cytoplasm. The enzyme catalyses tRNA(Gly) + glycine + ATP = glycyl-tRNA(Gly) + AMP + diphosphate. In Shewanella putrefaciens (strain CN-32 / ATCC BAA-453), this protein is Glycine--tRNA ligase beta subunit.